A 66-amino-acid chain; its full sequence is Large ribosomal subunit protein bL32 (66 aa).

Basic residues predominate over residues 1–18; the sequence is MAIVPKRKTSKQRKHKRR. The disordered stretch occupies residues 1–21; sequence MAIVPKRKTSKQRKHKRRTND.

This sequence belongs to the bacterial ribosomal protein bL32 family.

The protein is Large ribosomal subunit protein bL32 of Mycoplasmopsis agalactiae (strain NCTC 10123 / CIP 59.7 / PG2) (Mycoplasma agalactiae).